The sequence spans 550 residues: CTP synthase (550 aa).

The tract at residues 1–266 is amidoligase domain; the sequence is MNVNYIFVTG…DEYICKYFNL (266 aa). Ser-14 serves as a coordination point for CTP. Ser-14 is a binding site for UTP. ATP-binding positions include 15–20 and Asp-72; that span reads SLGKGI. Positions 72 and 140 each coordinate Mg(2+). CTP is bound by residues 147–149, 187–192, and Lys-223; these read DIE and KTKPTQ. UTP is bound by residues 187-192 and Lys-223; that span reads KTKPTQ. Positions 291–546 constitute a Glutamine amidotransferase type-1 domain; it reads TIGIVGKYIR…INAAIQYQCK (256 aa). Gly-353 contributes to the L-glutamine binding site. Cys-380 functions as the Nucleophile; for glutamine hydrolysis in the catalytic mechanism. L-glutamine is bound by residues 381–384, Glu-404, and Arg-474; that span reads LGMQ. Residues His-519 and Glu-521 contribute to the active site.

This sequence belongs to the CTP synthase family. In terms of assembly, homotetramer.

The enzyme catalyses UTP + L-glutamine + ATP + H2O = CTP + L-glutamate + ADP + phosphate + 2 H(+). The catalysed reaction is L-glutamine + H2O = L-glutamate + NH4(+). It catalyses the reaction UTP + NH4(+) + ATP = CTP + ADP + phosphate + 2 H(+). It participates in pyrimidine metabolism; CTP biosynthesis via de novo pathway; CTP from UDP: step 2/2. Its activity is regulated as follows. Allosterically activated by GTP, when glutamine is the substrate; GTP has no effect on the reaction when ammonia is the substrate. The allosteric effector GTP functions by stabilizing the protein conformation that binds the tetrahedral intermediate(s) formed during glutamine hydrolysis. Inhibited by the product CTP, via allosteric rather than competitive inhibition. Catalyzes the ATP-dependent amination of UTP to CTP with either L-glutamine or ammonia as the source of nitrogen. Regulates intracellular CTP levels through interactions with the four ribonucleotide triphosphates. In Blochmanniella floridana, this protein is CTP synthase.